The following is a 578-amino-acid chain: Proline--tRNA ligase (578 aa).

It belongs to the class-II aminoacyl-tRNA synthetase family. ProS type 1 subfamily. As to quaternary structure, homodimer.

It localises to the cytoplasm. It carries out the reaction tRNA(Pro) + L-proline + ATP = L-prolyl-tRNA(Pro) + AMP + diphosphate. In terms of biological role, catalyzes the attachment of proline to tRNA(Pro) in a two-step reaction: proline is first activated by ATP to form Pro-AMP and then transferred to the acceptor end of tRNA(Pro). As ProRS can inadvertently accommodate and process non-cognate amino acids such as alanine and cysteine, to avoid such errors it has two additional distinct editing activities against alanine. One activity is designated as 'pretransfer' editing and involves the tRNA(Pro)-independent hydrolysis of activated Ala-AMP. The other activity is designated 'posttransfer' editing and involves deacylation of mischarged Ala-tRNA(Pro). The misacylated Cys-tRNA(Pro) is not edited by ProRS. This is Proline--tRNA ligase from Paraburkholderia phymatum (strain DSM 17167 / CIP 108236 / LMG 21445 / STM815) (Burkholderia phymatum).